We begin with the raw amino-acid sequence, 1221 residues long: Deubiquitinating protein VCPIP1 (1221 aa).

Residues 1 to 19 (MSQPPPPPPLPPPPPPPEA) show a composition bias toward pro residues. A disordered region spans residues 1 to 40 (MSQPPPPPPLPPPPPPPEAPQTSSSLAAAATPGGLSKRRD). The OTU domain maps to 207–360 (LIPVHVDGDG…RNHYIPLVGI (154 aa)). Asp-215 is a catalytic residue. Catalysis depends on Cys-218, which acts as the Nucleophile. His-353 is an active-site residue. Position 407 is an N6-acetyllysine (Lys-407). Disordered stretches follow at residues 724 to 778 (SVMQ…KIRI) and 988 to 1009 (EATT…GSGG). Phosphoserine is present on residues Ser-746 and Ser-756. The segment covering 754–770 (PSSAPATPTKAPYSPTT) has biased composition (low complexity). Thr-762 carries the post-translational modification Phosphothreonine. Phosphoserine is present on residues Ser-767, Ser-993, Ser-997, and Ser-1076. Disordered stretches follow at residues 1117-1177 (ASMD…TDSR) and 1189-1221 (RSKA…MDHS). The segment covering 1143-1156 (VSSSVRPGNLQTGL) has biased composition (polar residues). The segment covering 1162 to 1173 (LTGGTENLNTET) has biased composition (low complexity). Residues Ser-1197 and Ser-1206 each carry the phosphoserine modification. Positions 1198-1208 (MEEPEEMDSQD) are enriched in acidic residues. Polar residues predominate over residues 1209 to 1221 (AETTNTTEPMDHS).

Binds VCP and the ternary complex containing STX5A, NSFL1C and VCP. In terms of processing, phosphorylated at Ser-1206 by ATM or ATR following induction of covalent DNA-protein cross-links (DPCs). In terms of tissue distribution, widely expressed.

The protein resides in the nucleus. It is found in the cytoplasm. Its subcellular location is the endoplasmic reticulum. It localises to the golgi apparatus. The protein localises to the golgi stack. The catalysed reaction is Thiol-dependent hydrolysis of ester, thioester, amide, peptide and isopeptide bonds formed by the C-terminal Gly of ubiquitin (a 76-residue protein attached to proteins as an intracellular targeting signal).. In terms of biological role, deubiquitinating enzyme involved in DNA repair and reassembly of the Golgi apparatus and the endoplasmic reticulum following mitosis. Necessary for VCP-mediated reassembly of Golgi stacks after mitosis. Plays a role in VCP-mediated formation of transitional endoplasmic reticulum (tER). Mediates dissociation of the ternary complex containing STX5A, NSFL1C and VCP. Also involved in DNA repair following phosphorylation by ATM or ATR: acts by catalyzing deubiquitination of SPRTN, thereby promoting SPRTN recruitment to chromatin and subsequent proteolytic cleavage of covalent DNA-protein cross-links (DPCs). Hydrolyzes 'Lys-11'- and 'Lys-48'-linked polyubiquitin chains. In Rattus norvegicus (Rat), this protein is Deubiquitinating protein VCPIP1.